The following is a 409-amino-acid chain: Argininosuccinate synthase (409 aa).

ATP-binding positions include 10–18 and Ala-37; that span reads AYSGGLDTS. Residues Tyr-90 and Ser-95 each coordinate L-citrulline. Gly-120 contacts ATP. L-aspartate contacts are provided by Thr-122, Asn-126, and Asp-127. Asn-126 serves as a coordination point for L-citrulline. L-citrulline is bound by residues Arg-130, Ser-182, Ser-191, Glu-267, and Tyr-279.

It belongs to the argininosuccinate synthase family. Type 1 subfamily. Homotetramer.

The protein resides in the cytoplasm. The catalysed reaction is L-citrulline + L-aspartate + ATP = 2-(N(omega)-L-arginino)succinate + AMP + diphosphate + H(+). It participates in amino-acid biosynthesis; L-arginine biosynthesis; L-arginine from L-ornithine and carbamoyl phosphate: step 2/3. The protein is Argininosuccinate synthase of Thiobacillus denitrificans (strain ATCC 25259 / T1).